The primary structure comprises 232 residues: 5'-methylthioadenosine/S-adenosylhomocysteine nucleosidase (232 aa).

Catalysis depends on Glu12, which acts as the Proton acceptor. Substrate-binding positions include Gly78, Ile152, and Met173 to Glu174. Catalysis depends on Asp197, which acts as the Proton donor.

It belongs to the PNP/UDP phosphorylase family. MtnN subfamily. As to quaternary structure, homodimer.

The catalysed reaction is S-adenosyl-L-homocysteine + H2O = S-(5-deoxy-D-ribos-5-yl)-L-homocysteine + adenine. The enzyme catalyses S-methyl-5'-thioadenosine + H2O = 5-(methylsulfanyl)-D-ribose + adenine. It catalyses the reaction 5'-deoxyadenosine + H2O = 5-deoxy-D-ribose + adenine. It participates in amino-acid biosynthesis; L-methionine biosynthesis via salvage pathway; S-methyl-5-thio-alpha-D-ribose 1-phosphate from S-methyl-5'-thioadenosine (hydrolase route): step 1/2. In terms of biological role, catalyzes the irreversible cleavage of the glycosidic bond in both 5'-methylthioadenosine (MTA) and S-adenosylhomocysteine (SAH/AdoHcy) to adenine and the corresponding thioribose, 5'-methylthioribose and S-ribosylhomocysteine, respectively. Also cleaves 5'-deoxyadenosine, a toxic by-product of radical S-adenosylmethionine (SAM) enzymes, into 5-deoxyribose and adenine. Thus, is required for in vivo function of the radical SAM enzymes biotin synthase and lipoic acid synthase, that are inhibited by 5'-deoxyadenosine accumulation. The polypeptide is 5'-methylthioadenosine/S-adenosylhomocysteine nucleosidase (Shigella boydii serotype 4 (strain Sb227)).